A 450-amino-acid polypeptide reads, in one-letter code: Phosphoglucosamine mutase (450 aa).

S107 acts as the Phosphoserine intermediate in catalysis. Mg(2+) contacts are provided by S107, D246, D248, and D250. S107 bears the Phosphoserine mark.

The protein belongs to the phosphohexose mutase family. Mg(2+) serves as cofactor. In terms of processing, activated by phosphorylation.

It catalyses the reaction alpha-D-glucosamine 1-phosphate = D-glucosamine 6-phosphate. Its function is as follows. Catalyzes the conversion of glucosamine-6-phosphate to glucosamine-1-phosphate. The polypeptide is Phosphoglucosamine mutase (Dechloromonas aromatica (strain RCB)).